The following is a 1531-amino-acid chain: Myosin-17 (1531 aa).

The 50-residue stretch at 8 to 57 folds into the Myosin N-terminal SH3-like domain; sequence IVGSHVWIEDPGAAWIDGEVVKINGEEVHAHTTNGKTVVANIANVFPKDT. The Myosin motor domain maps to 62-732; it reads GGVDDMTKLS…QMAELDARRA (671 aa). ATP is bound by residues 156 to 163 and 209 to 217; these read GESGAGKT and NNNSSRFGK. Actin-binding stretches follow at residues 495-529, 531-554, 589-613, and 613-635; these read LIEK…YQTF, NYKR…AGEV, FPRL…KLQL, and LQSL…KPNN. 5 consecutive IQ domains span residues 758–787, 783–812, 806–835, 831–860, and 854–883; these read LRGA…QAAA, RQAA…STIT, IRHS…MKAA, QMKA…AALS, and LQKA…AARD. The stretch at 884–1056 forms a coiled coil; the sequence is TGALREAKDK…VLRQQALAIS (173 aa). Residues 1071 to 1090 are disordered; that stretch reads LPRTPENGNYLNGGTKTTPD. Polar residues predominate over residues 1076–1090; sequence ENGNYLNGGTKTTPD. Residues 1159–1470 form the Dilute domain; the sequence is DRIIQTIATA…IANMRVMMTE (312 aa). A Phosphoserine modification is found at S1517.

It belongs to the TRAFAC class myosin-kinesin ATPase superfamily. Myosin family. Plant myosin class XI subfamily. Homodimer. Interacts with MYOB1, MYOB2 and MYOB3. Interacts with PHOX1 and PHOX2. As to expression, expressed ubiquitously.

The protein resides in the cytoplasm. In terms of biological role, myosin heavy chain that is required for the cell cycle-regulated transport of various organelles and proteins for their segregation. Functions by binding with its tail domain to receptor proteins on organelles and exerting force with its N-terminal motor domain against actin filaments, thereby transporting its cargo along polarized actin cables. Involved in the tip growth of root hair cells and in the elongation of trichome stalk and branches. Plays a major role in trafficking of Golgi stacks, mitochondria and peroxisomes during root hair development. Acts as the primary contributor to ER streaming with a major role in the movement of Golgi bodies. Required for development of pavement cells, trichomes, and stigmatic papillae. Together with XI-F, required for the regulation of organ bending, such as gravitropic root bending. The sequence is that of Myosin-17 from Arabidopsis thaliana (Mouse-ear cress).